Reading from the N-terminus, the 194-residue chain is Leucyl/phenylalanyl-tRNA--protein transferase (194 aa).

This sequence belongs to the L/F-transferase family.

The protein localises to the cytoplasm. The enzyme catalyses N-terminal L-lysyl-[protein] + L-leucyl-tRNA(Leu) = N-terminal L-leucyl-L-lysyl-[protein] + tRNA(Leu) + H(+). It catalyses the reaction N-terminal L-arginyl-[protein] + L-leucyl-tRNA(Leu) = N-terminal L-leucyl-L-arginyl-[protein] + tRNA(Leu) + H(+). It carries out the reaction L-phenylalanyl-tRNA(Phe) + an N-terminal L-alpha-aminoacyl-[protein] = an N-terminal L-phenylalanyl-L-alpha-aminoacyl-[protein] + tRNA(Phe). Functions in the N-end rule pathway of protein degradation where it conjugates Leu, Phe and, less efficiently, Met from aminoacyl-tRNAs to the N-termini of proteins containing an N-terminal arginine or lysine. This chain is Leucyl/phenylalanyl-tRNA--protein transferase, found in Chlorobaculum tepidum (strain ATCC 49652 / DSM 12025 / NBRC 103806 / TLS) (Chlorobium tepidum).